Here is a 1039-residue protein sequence, read N- to C-terminus: MAGSADISKGCSGQLFAELHSLSHYSFLRSAASPEELVRRADDLGYAAIAITDECSVAGIVKAYQESKARDIKLVVGSEFRVPEVGTLVVLAPTREAYAELCKKITLFRSRSEKGHYQANIDDFFDGFSQCLLLWQPDFSQAQLLAIGEKLKSVWQQRFWLLYERHYQADDERAFQAMVELQQAVKVKVTCAGGVCMATIEQQPLYDILNAIQHGGSLAHQPGLASNNAEHHLRSLSELQQCYPQKWLAETLVIAQQCQFCLSELRYEYPAELVPEGMSASGYLKQLTEQGARWRYPQGVPESIKALYLKELSLIKEQSYEPFFLTIHDLVRFAREQGILFQGRGSAANSVVCYCLGITAVNPAQIQVLFERFISKERNEPPDIDVDFEHERREEVIQYIYRKYGRQRAALAATVITYRFKSAFRDVGKALGFSEQQLQYFRRNLDRRDKEQSWQQQLVQQHPEVTNSVRGQHLLQFTEQLMGTPRHLSQHVGGFVIAADDLSRLVPVENASMTDRTVIQWDKTDLESLGLLKVDVLALGMLTALRKMLALINLRYDQQLTMATIPQEDSRVYQQLQTADSMGIFQIESRAQMNMLPRLKPKTFYDLVIQIAIVRPGPIQGDMVHPFLRRRAGLEEVDYPSDEVKSVLERTLGVPIFQEQVIKLAMVAAGFSGGEADQLRRAMASWGQNGHLTRFEDKLINGMLERGYKQEFAERLFRQICGFGQYGFPESHSASFANLAYVSSWFKTYHPAAFYVGLLNSLPMGFYSASQLVQDAQRHGVAFLAADINASDWNYCWLPKEDTNSDETVRMGLRQIQGLSESRIKHTLMQRPEDGFTSMHELRKSGLRDSDINALARADALKSIAGHRHQAHWQSLSMSDQQMPLFENVKDRPARQLPAPDEPDNIKADYESTGLTLGRHPLALLRNNPELKNCVLASDLMTCRSGQVLTLAGLVTCRQRPGTRSGVTFLTLEDESGNSNVVVWANTARQFRQCFLTSNLLWVKGIVEIHDGVVHVIAGRLKDLSGLLSFTRLESRRFH.

This sequence belongs to the DNA polymerase type-C family. DnaE2 subfamily.

The protein localises to the cytoplasm. The enzyme catalyses DNA(n) + a 2'-deoxyribonucleoside 5'-triphosphate = DNA(n+1) + diphosphate. In terms of biological role, DNA polymerase involved in damage-induced mutagenesis and translesion synthesis (TLS). It is not the major replicative DNA polymerase. The protein is Error-prone DNA polymerase of Idiomarina loihiensis (strain ATCC BAA-735 / DSM 15497 / L2-TR).